Consider the following 556-residue polypeptide: Membrane protein insertase YidC (556 aa).

A helical membrane pass occupies residues 5-25; it reads TLTAIVLSFVLLTAFQFYMAW. Residues 36–74 are disordered; that stretch reads QVQSGESSAPAPLASTAPVADALPPPVEGMAGSAPQQAM. The span at 42–55 shows a compositional bias: low complexity; the sequence is SSAPAPLASTAPVA. The next 4 membrane-spanning stretches (helical) occupy residues 370 to 390, 441 to 461, 468 to 488, and 510 to 530; these read NYGV…FPLA, LPIL…FLSV, FMLW…PLLM, and IMMF…SGLV.

Belongs to the OXA1/ALB3/YidC family. Type 1 subfamily. In terms of assembly, interacts with the Sec translocase complex via SecD. Specifically interacts with transmembrane segments of nascent integral membrane proteins during membrane integration.

It localises to the cell inner membrane. Functionally, required for the insertion and/or proper folding and/or complex formation of integral membrane proteins into the membrane. Involved in integration of membrane proteins that insert both dependently and independently of the Sec translocase complex, as well as at least some lipoproteins. Aids folding of multispanning membrane proteins. This chain is Membrane protein insertase YidC, found in Magnetococcus marinus (strain ATCC BAA-1437 / JCM 17883 / MC-1).